Consider the following 154-residue polypeptide: Deoxyuridine 5'-triphosphate nucleotidohydrolase (154 aa).

Substrate is bound by residues 64–66 (RSG), Asn77, 81–83 (TID), and Lys91.

This sequence belongs to the dUTPase family. Homotrimer. Mg(2+) serves as cofactor.

The enzyme catalyses dUTP + H2O = dUMP + diphosphate + H(+). It participates in pyrimidine metabolism; dUMP biosynthesis; dUMP from dCTP (dUTP route): step 2/2. Functionally, this enzyme is involved in nucleotide metabolism: it produces dUMP, the immediate precursor of thymidine nucleotides and it decreases the intracellular concentration of dUTP so that uracil cannot be incorporated into DNA. This chain is Deoxyuridine 5'-triphosphate nucleotidohydrolase, found in Mycobacterium avium (strain 104).